The sequence spans 470 residues: Argininosuccinate lyase (470 aa).

It belongs to the lyase 1 family. Argininosuccinate lyase subfamily.

The protein localises to the cytoplasm. It catalyses the reaction 2-(N(omega)-L-arginino)succinate = fumarate + L-arginine. It functions in the pathway amino-acid biosynthesis; L-arginine biosynthesis; L-arginine from L-ornithine and carbamoyl phosphate: step 3/3. The chain is Argininosuccinate lyase from Mycobacterium sp. (strain MCS).